Here is a 199-residue protein sequence, read N- to C-terminus: dITP/XTP pyrophosphatase (199 aa).

Serine 8–lysine 13 contributes to the substrate binding site. Aspartate 69 serves as the catalytic Proton acceptor. Mg(2+) is bound at residue aspartate 69. Substrate contacts are provided by residues serine 70, phenylalanine 154–asparagine 157, lysine 177, and histidine 182–arginine 183.

Belongs to the HAM1 NTPase family. As to quaternary structure, homodimer. Mg(2+) serves as cofactor.

It carries out the reaction XTP + H2O = XMP + diphosphate + H(+). The catalysed reaction is dITP + H2O = dIMP + diphosphate + H(+). It catalyses the reaction ITP + H2O = IMP + diphosphate + H(+). Its function is as follows. Pyrophosphatase that catalyzes the hydrolysis of nucleoside triphosphates to their monophosphate derivatives, with a high preference for the non-canonical purine nucleotides XTP (xanthosine triphosphate), dITP (deoxyinosine triphosphate) and ITP. Seems to function as a house-cleaning enzyme that removes non-canonical purine nucleotides from the nucleotide pool, thus preventing their incorporation into DNA/RNA and avoiding chromosomal lesions. In Xylella fastidiosa (strain Temecula1 / ATCC 700964), this protein is dITP/XTP pyrophosphatase.